The chain runs to 386 residues: Short-chain dehydrogenase/reductase family 42E member 1 (386 aa).

The Proton acceptor role is filled by Tyr-150. An NAD(+)-binding site is contributed by Lys-154. 2 consecutive transmembrane segments (helical) span residues 279-299 and 363-383; these read FPLS…FFIS and YLIW…SWLP.

This sequence belongs to the 3-beta-HSD family.

It localises to the membrane. The chain is Short-chain dehydrogenase/reductase family 42E member 1 (sdr42e1) from Xenopus laevis (African clawed frog).